An 88-amino-acid polypeptide reads, in one-letter code: Elongation factor 1-beta (88 aa).

This sequence belongs to the EF-1-beta/EF-1-delta family.

Promotes the exchange of GDP for GTP in EF-1-alpha/GDP, thus allowing the regeneration of EF-1-alpha/GTP that could then be used to form the ternary complex EF-1-alpha/GTP/AAtRNA. In Archaeoglobus fulgidus (strain ATCC 49558 / DSM 4304 / JCM 9628 / NBRC 100126 / VC-16), this protein is Elongation factor 1-beta (ef1b).